A 147-amino-acid chain; its full sequence is MVHFTAEEKSTILSLWGKVNVEEAGGEALGRLLVVYPWTQRFFDSFGNLSSASAIMGNPKVKAHGKKVLTSFGEAVKNLDNLKPAFAKLSELHCDKLHVDPENFKLLGNVMVIILATHFGKEFTPDVQAAWQKLVSGVATALAHKYH.

In terms of domain architecture, Globin spans 3–147 (HFTAEEKSTI…VATALAHKYH (145 aa)). A phosphoserine mark is found at S14 and S51. Heme b contacts are provided by H64 and H93.

The protein belongs to the globin family. Heterotetramer of two alpha chains and two epsilon chains in early embryonic hemoglobin Gower-2; two zeta chains and two epsilon chains in early embryonic hemoglobin Gower-1. In terms of tissue distribution, red blood cells.

The epsilon chain is a beta-type chain of early mammalian embryonic hemoglobin. This chain is Hemoglobin subunit epsilon (HBE1), found in Microcebus murinus (Gray mouse lemur).